The sequence spans 264 residues: 3-methyl-2-oxobutanoate hydroxymethyltransferase (264 aa).

D45 and D84 together coordinate Mg(2+). Residues 45 to 46, D84, and K112 contribute to the 3-methyl-2-oxobutanoate site; that span reads DS. E114 is a binding site for Mg(2+). E181 acts as the Proton acceptor in catalysis.

Belongs to the PanB family. Homodecamer; pentamer of dimers. Mg(2+) serves as cofactor.

It is found in the cytoplasm. It catalyses the reaction 3-methyl-2-oxobutanoate + (6R)-5,10-methylene-5,6,7,8-tetrahydrofolate + H2O = 2-dehydropantoate + (6S)-5,6,7,8-tetrahydrofolate. It participates in cofactor biosynthesis; (R)-pantothenate biosynthesis; (R)-pantoate from 3-methyl-2-oxobutanoate: step 1/2. Its function is as follows. Catalyzes the reversible reaction in which hydroxymethyl group from 5,10-methylenetetrahydrofolate is transferred onto alpha-ketoisovalerate to form ketopantoate. The sequence is that of 3-methyl-2-oxobutanoate hydroxymethyltransferase from Tolumonas auensis (strain DSM 9187 / NBRC 110442 / TA 4).